Reading from the N-terminus, the 104-residue chain is Increased recombination centers protein 13 (104 aa).

The helical transmembrane segment at 63-83 threads the bilayer; that stretch reads LVHLFSYVFFLFLLKICVDVL.

It localises to the membrane. In terms of biological role, may be involved in a pathway contributing to genomic integrity. This is Increased recombination centers protein 13 (IRC13) from Saccharomyces cerevisiae (strain ATCC 204508 / S288c) (Baker's yeast).